We begin with the raw amino-acid sequence, 122 residues long: Hexon-interlacing protein (122 aa).

Residues 72-106 (VTELNESIDELQQKMTELEKRLKIMEEKIEEIKLA) are a coiled coil.

The protein belongs to the adenoviridae hexon-interlacing protein family. In terms of assembly, homotrimer. Interacts with hexon protein; this interaction tethers the hexons together. Self-interacts with adjacent proteins. Interacts with kinesin light chain KLC1; this interaction leads to capsid disruption at the nuclear pore complex during virus entry into host cell.

The protein localises to the virion. The protein resides in the host nucleus. In terms of biological role, structural component of the virion that acts as a cement protein on the capsid exterior and forms triskelion structures consisting of three molecules that stabilize three hexon trimers at the center of each icosahedral facet and fixes the peripentonal hexons. Dispensable for assembly. During virus entry, recruits the anterograde motor kinesin-1 to the capsid docked at the nuclear pore complex thereby subjecting the docked capsid to a pulling force. The resulting tension leads to capsid disruption, dispersion of capsid fragments toward cell periphery and eventually viral DNA entry into the host nucleus. The polypeptide is Hexon-interlacing protein (Tupaiidae (tree shrews)).